The sequence spans 320 residues: Apolipoprotein E (320 aa).

Positions 1 to 18 (MKVLWAAFLVAFLAGCQG) are cleaved as a signal peptide. A run of 8 repeats spans residues 82–103 (ALMD…EQLS), 104–125 (PVAE…ARLG), 126–147 (ADME…AMLG), 148–169 (QSTD…KRLL), 170–191 (RDVD…EGAE), 192–213 (RGVS…ARAA), 214–236 (TVGS…ERLR), and 237–258 (ARME…EQVE). The segment at 82–199 (ALMDETMKEL…AERGVSAIRE (118 aa)) is 8 X 22 AA approximate tandem repeats. At Met145 the chain carries Methionine sulfoxide. Residue Ser149 is modified to Phosphoserine. Residues 160–170 (HLRKLRKRLLR) are LDL and other lipoprotein receptors binding. 164 to 167 (LRKR) lines the heparin pocket. A lipid-binding and lipoprotein association region spans residues 212–293 (AATVGSSLAS…SWFEPLVEDM (82 aa)). A heparin-binding site is contributed by 232–239 (GERLRARM). A homooligomerization region spans residues 269-320 (QQMRLQAEAFQARLKSWFEPLVEDMQRQWAGLVEKVQAAVGASATPVPSDNH). The tract at residues 281-293 (RLKSWFEPLVEDM) is specificity for association with VLDL.

The protein belongs to the apolipoprotein A1/A4/E family. As to quaternary structure, homotetramer. May interact with ABCA1; functionally associated with ABCA1 in the biogenesis of HDLs. May interact with APP/A4 amyloid-beta peptide; the interaction is extremely stable in vitro but its physiological significance is unclear. May interact with MAPT. May interact with MAP2. In the cerebrospinal fluid, interacts with secreted SORL1. Interacts with PMEL; this allows the loading of PMEL luminal fragment on ILVs to induce fibril nucleation. APOE exists as multiple glycosylated and sialylated glycoforms within cells and in plasma. The extent of glycosylation and sialylation are tissue and context specific. In terms of processing, glycated in plasma VLDL. Post-translationally, phosphorylated by FAM20C in the extracellular medium.

Its subcellular location is the secreted. The protein resides in the extracellular space. The protein localises to the extracellular matrix. It is found in the extracellular vesicle. It localises to the endosome. Its subcellular location is the multivesicular body. Its function is as follows. APOE is an apolipoprotein, a protein associating with lipid particles, that mainly functions in lipoprotein-mediated lipid transport between organs via the plasma and interstitial fluids. APOE is a core component of plasma lipoproteins and is involved in their production, conversion and clearance. Apolipoproteins are amphipathic molecules that interact both with lipids of the lipoprotein particle core and the aqueous environment of the plasma. As such, APOE associates with chylomicrons, chylomicron remnants, very low density lipoproteins (VLDL) and intermediate density lipoproteins (IDL) but shows a preferential binding to high-density lipoproteins (HDL). It also binds a wide range of cellular receptors including the LDL receptor/LDLR, the LDL receptor-related proteins LRP1, LRP2 and LRP8 and the very low-density lipoprotein receptor/VLDLR that mediate the cellular uptake of the APOE-containing lipoprotein particles. Finally, APOE also has a heparin-binding activity and binds heparan-sulfate proteoglycans on the surface of cells, a property that supports the capture and the receptor-mediated uptake of APOE-containing lipoproteins by cells. A main function of APOE is to mediate lipoprotein clearance through the uptake of chylomicrons, VLDLs, and HDLs by hepatocytes. APOE is also involved in the biosynthesis by the liver of VLDLs as well as their uptake by peripheral tissues ensuring the delivery of triglycerides and energy storage in muscle, heart and adipose tissues. By participating in the lipoprotein-mediated distribution of lipids among tissues, APOE plays a critical role in plasma and tissues lipid homeostasis. APOE is also involved in two steps of reverse cholesterol transport, the HDLs-mediated transport of cholesterol from peripheral tissues to the liver, and thereby plays an important role in cholesterol homeostasis. First, it is functionally associated with ABCA1 in the biogenesis of HDLs in tissues. Second, it is enriched in circulating HDLs and mediates their uptake by hepatocytes. APOE also plays an important role in lipid transport in the central nervous system, regulating neuron survival and sprouting. The chain is Apolipoprotein E (APOE) from Saimiri boliviensis boliviensis (Bolivian squirrel monkey).